The sequence spans 242 residues: Small ribosomal subunit protein uS5 (242 aa).

The span at 1–14 (MADENSTGPGNQPE) shows a compositional bias: polar residues. The segment at 1-65 (MADENSTGPG…DRRPRDEDGG (65 aa)) is disordered. The span at 41-65 (DGGRGGRDGGRGRRDDRRPRDEDGG) shows a compositional bias: basic and acidic residues. The region spanning 68-131 (LIEKLVHINR…AAAKKAMIRV (64 aa)) is the S5 DRBM domain. The tract at residues 204–242 (EQTSPKSVAQRRGKKVSDLIKRGGASDRAAEAEAAAVTE) is disordered. The span at 218–234 (KVSDLIKRGGASDRAAE) shows a compositional bias: basic and acidic residues.

Belongs to the universal ribosomal protein uS5 family. In terms of assembly, part of the 30S ribosomal subunit. Contacts proteins S4 and S8.

Functionally, with S4 and S12 plays an important role in translational accuracy. Located at the back of the 30S subunit body where it stabilizes the conformation of the head with respect to the body. The polypeptide is Small ribosomal subunit protein uS5 (Sphingopyxis alaskensis (strain DSM 13593 / LMG 18877 / RB2256) (Sphingomonas alaskensis)).